A 394-amino-acid polypeptide reads, in one-letter code: MRAIISVALFLSLSLLSAVNAAEILSAGDTDDVIPDSYIVVMRDGLSTDAFNSHTTQISGFRNEDRNVKASLKKTFDLNGLKGYSGTFDEATIRQIANDPAVKYIEHDRIANARGLVEQQDAGWNLARISHKKTGARTYVYDKSAGAGISVCLVDTGVDVDNPDLGGRATWGANFVDNDDSDGNGHGTFLASLIAGQKHGVAKKAKIIAVKVLDANGSGSYSNVISGIDWCVKYAKEHGISERMVVNLSLGGGYSQAVNQAAENAVLAGMFVSAAVGGSNRDARNDSPASARGVCAIAASTMDDKAALFSNYGSIVAVYAPGQNIMAAGRMGSVTLSGTSFAAGHASGVGAYLLALEKITGDRVCTRIKELAIPVIRNSPSNTTRLLLYNGSGR.

The signal sequence occupies residues 1 to 21; it reads MRAIISVALFLSLSLLSAVNA. Residues 22-114 constitute a propeptide that is removed on maturation; that stretch reads AEILSAGDTD…IEHDRIANAR (93 aa). The region spanning 37 to 110 is the Inhibitor I9 domain; that stretch reads SYIVVMRDGL…AVKYIEHDRI (74 aa). Positions 123–394 constitute a Peptidase S8 domain; the sequence is GWNLARISHK…RLLLYNGSGR (272 aa). Residues D155 and H186 each act as charge relay system in the active site. 2 N-linked (GlcNAc...) asparagine glycosylation sites follow: N216 and N247. Catalysis depends on S340, which acts as the Charge relay system. N-linked (GlcNAc...) asparagine glycans are attached at residues N382 and N390.

The protein belongs to the peptidase S8 family.

The protein localises to the secreted. Functionally, secreted subtilisin-like serine protease with keratinolytic activity that contributes to pathogenicity. The protein is Subtilisin-like protease CPC735_005570 of Coccidioides posadasii (strain C735) (Valley fever fungus).